We begin with the raw amino-acid sequence, 156 residues long: Low-salt glycan biosynthesis protein Agl8 (156 aa).

Substrate contacts are provided by residues 14-15 and Arg47; that span reads RI. Residues 25-156 form the Nudix hydrolase domain; that stretch reads ANVPLVSVDL…YVERYLDALD (132 aa). Mg(2+) contacts are provided by Gly60, Glu80, and Gln130. The short motif at 61–82 is the Nudix box element; that stretch reads GTVFKNETLTDALYRVADEELG.

This sequence belongs to the Nudix hydrolase family. Mg(2+) serves as cofactor.

The protein operates within protein modification; protein glycosylation. It participates in cell surface structure biogenesis; S-layer biogenesis. Nudix hydrolase involved in N-glycan biosynthetic pathway that takes place under low-salt conditions (1.75 M instead of 3.4 M). Participates in the formation of the tetrasaccharide present at 'Asn-532' of S-layer glycoprotein Csg, consisting of a sulfated hexose, 2 hexoses and rhamnose. Mediates attachment of sugar 3 in the tetrasaccharide. The sequence is that of Low-salt glycan biosynthesis protein Agl8 (agl8) from Haloferax volcanii (strain ATCC 29605 / DSM 3757 / JCM 8879 / NBRC 14742 / NCIMB 2012 / VKM B-1768 / DS2) (Halobacterium volcanii).